The sequence spans 1651 residues: Alsin (1651 aa).

RCC1 repeat units follow at residues 59–108 (DGEV…AVTE), 109–167 (SGVV…ALSL), and 169–218 (REIW…ALVQ). The interval 425–462 (ETAAQSGSASTGPESLKDLREEQVKQESLQGKKSSSLM) is disordered. A compositionally biased stretch (polar residues) spans 427-437 (AAQSGSASTGP). A compositionally biased stretch (basic and acidic residues) spans 439-449 (SLKDLREEQVK). Positions 450 to 461 (QESLQGKKSSSL) are enriched in polar residues. Phosphoserine occurs at positions 459, 460, 477, and 486. The residue at position 504 (Thr504) is a Phosphothreonine. 2 RCC1 repeats span residues 519–570 (RTEV…ALTA) and 572–621 (SQVY…FLVD). The residue at position 527 (Lys527) is an N6-acetyllysine. One can recognise a DH domain in the interval 684-879 (GYIASLHELA…ESLALHLGKK (196 aa)). Positions 895 to 1001 (GKMTDSLRKP…RAISQAVDQA (107 aa)) constitute a PH domain. MORN repeat units lie at residues 1043-1065 (YDGR…DGKM), 1066-1088 (YSGM…NKAL), 1094-1116 (YVGH…SGEV), 1117-1139 (FEGC…KLTS), 1145-1167 (FIGQ…TRGE), 1169-1191 (YMGM…FGLY), 1192-1214 (YEGN…DDTI), and 1215-1238 (YEGE…HGDY). Ser1329 is subject to Phosphoserine. In terms of domain architecture, VPS9 spans 1507–1651 (KQPDIALLGF…YFQIQREKLN (145 aa)).

As to quaternary structure, forms a heteromeric complex with ALS2CL. Interacts with ALS2CL.

Functionally, may act as a GTPase regulator. Controls survival and growth of spinal motoneurons. The chain is Alsin (Als2) from Mus musculus (Mouse).